A 1080-amino-acid chain; its full sequence is Ubiquitin carboxyl-terminal hydrolase 8 (1080 aa).

In terms of domain architecture, MIT spans T33–A116. Residues R119–E173 show a composition bias toward basic and acidic residues. Positions R119–A176 are disordered. S160 carries the phosphoserine modification. A Rhodanese domain is found at K195 to T313. The segment covering A379–P393 has biased composition (low complexity). Disordered regions lie at residues A379 to E455, E468 to E605, and P642 to C710. S392 carries the post-translational modification Phosphoserine. The SH3-binding signature appears at P405–P413. Residues L417–N427 are compositionally biased toward basic and acidic residues. S446 bears the Phosphoserine mark. Basic and acidic residues-rich tracts occupy residues E468–S535, S549–A577, and A593–E605. T569 carries the post-translational modification Phosphothreonine. Residues S678–L688 show a composition bias toward polar residues. S680 and S681 each carry phosphoserine. In terms of domain architecture, USP spans T739–L1071. C748 serves as the catalytic Nucleophile. Residue T907 is modified to Phosphothreonine. Catalysis depends on H1029, which acts as the Proton acceptor.

Belongs to the peptidase C19 family. In terms of assembly, forms a ternary complex with RNF128 and OTUB1. Interacts (via C-terminal UCH catalytic domain) with OTUB1 isoform 1. Interacts with STAM2 (via SH3 domain). Interacts with DNAJB3, EGFR, EPS15, RASGRF1, RNF41, YWHAE, YWHAG and YWHAZ. Interacts with NBR1, RASGRF1, RNF41 and IST1. Associates with the ESCRT-0 complex and with microtubules. Interacts with BIRC6/bruce and KIF23/MKLP1. Post-translationally, phosphorylation of Ser-680 is essential for interaction with YWHAE and for cytosol localization. Undergoes dephosphorylation at Ser-680 in the M phase. Tyrosine-phosphorylated in its N-terminal half in an EGFR-dependent manner. In terms of processing, ubiquitinated. Inactive form is mostly monoubiquitinated, but polyubiquitination happens too. Ubiquitination is increased in EGF-stimulated cells. Ubiquitination of active form is undetectable, suggesting a possibility that USP8 deubiquitinates itself, thereby regulating its own function. Highly expressed in testis. Expressed at intermediate level in brain.

The protein localises to the cytoplasm. The protein resides in the nucleus. It localises to the endosome membrane. It is found in the cell membrane. It carries out the reaction Thiol-dependent hydrolysis of ester, thioester, amide, peptide and isopeptide bonds formed by the C-terminal Gly of ubiquitin (a 76-residue protein attached to proteins as an intracellular targeting signal).. Its function is as follows. Hydrolase that can remove conjugated ubiquitin from proteins and therefore plays an important regulatory role at the level of protein turnover by preventing degradation. Converts both 'Lys-48' an 'Lys-63'-linked ubiquitin chains. Catalytic activity is enhanced in the M phase. Involved in cell proliferation. Required to enter into S phase in response to serum stimulation. May regulate T-cell anergy mediated by RNF128 via the formation of a complex containing RNF128 and OTUB1. Probably regulates the stability of STAM2 and RASGRF1. Regulates endosomal ubiquitin dynamics, cargo sorting, membrane traffic at early endosomes, and maintenance of ESCRT-0 stability. The level of protein ubiquitination on endosomes is essential for maintaining the morphology of the organelle. Deubiquitinates EPS15 and controls tyrosine kinase stability. Removes conjugated ubiquitin from EGFR thus regulating EGFR degradation and downstream MAPK signaling. Involved in acrosome biogenesis through interaction with the spermatid ESCRT-0 complex and microtubules. Deubiquitinates BIRC6/bruce and KIF23/MKLP1. Deubiquitinates BACE1 which inhibits BACE1 lysosomal degradation and modulates BACE-mediated APP cleavage and amyloid-beta formation. This chain is Ubiquitin carboxyl-terminal hydrolase 8, found in Mus musculus (Mouse).